Reading from the N-terminus, the 423-residue chain is Myb-like protein G (423 aa).

An HTH myb-type domain is found at 36–90 (TISKQRENWTDEEHQKFLEALTLFDRDWKKIESFVGSKTVIQIRSHAQKYFIKVQ). The H-T-H motif DNA-binding region spans 63–86 (WKKIESFVGSKTVIQIRSHAQKYF). Disordered regions lie at residues 93–116 (NTGE…QKQK), 177–205 (QQAV…GTTL), and 284–372 (ISPR…LGNY). The segment covering 177–202 (QQAVTTAQSSQRNGGLPPNPSSNNGG) has biased composition (low complexity). The segment covering 286–295 (PRNSTGNINV) has biased composition (polar residues). Positions 302-354 (NNSNNNNNNNNNNNNNNNNNNNNNNNNNNNNNNNNNNNNNNNNNNNNNNNNNN) are enriched in low complexity. The span at 361 to 372 (QNHSNMVNLGNY) shows a compositional bias: polar residues.

Its subcellular location is the nucleus. This Dictyostelium discoideum (Social amoeba) protein is Myb-like protein G (mybG).